Reading from the N-terminus, the 448-residue chain is MAKHRYLPMTEQDEKEMLEVIGVKSIDDLFQDIPEKIRFKRDYDLKPAKSEPALLRELSKLASKNANTSEYASFLGAGVYSHYIPTVVDHVISRSEFYTAYTPYQPEISQGELQAIFEFQTMIAELTGMDLANSSMYDGGTALAEAAMLASGHTKRKKILISGAVHPESINVLKTYATGQHIEVEVIPEVDGKTDIDVLKKALSDDIAGFVVQYPNFYGQVEPLAELEKLVHENNSLLLVSSNPLSLGLLTPPGEFGADIVVGDSQVFGIPESFGGPHCGFFAVTNKLMRKVPGRLVGETVDENGKRGYVLTLQAREQHIRRDKATSNICSNQALNALASSVAMATLGKTGLVEMAKQNLDKSHYAKQKFRENGFEVLFSDGFFNEFVVKLSKPIKEVNESLLDEGIIGGYDLGFYDAKYEQHMLVAVTEMRTKEEIDAFVASLEGVK.

Belongs to the GcvP family. N-terminal subunit subfamily. As to quaternary structure, the glycine cleavage system is composed of four proteins: P, T, L and H. In this organism, the P 'protein' is a heterodimer of two subunits.

It catalyses the reaction N(6)-[(R)-lipoyl]-L-lysyl-[glycine-cleavage complex H protein] + glycine + H(+) = N(6)-[(R)-S(8)-aminomethyldihydrolipoyl]-L-lysyl-[glycine-cleavage complex H protein] + CO2. Functionally, the glycine cleavage system catalyzes the degradation of glycine. The P protein binds the alpha-amino group of glycine through its pyridoxal phosphate cofactor; CO(2) is released and the remaining methylamine moiety is then transferred to the lipoamide cofactor of the H protein. The protein is Probable glycine dehydrogenase (decarboxylating) subunit 1 of Listeria innocua serovar 6a (strain ATCC BAA-680 / CLIP 11262).